Here is a 23-residue protein sequence, read N- to C-terminus: Acidic phospholipase A2 Ts-A5 (23 aa).

Requires Ca(2+) as cofactor. In terms of processing, contains 7 disulfide bonds. Expressed by the venom gland.

The protein localises to the secreted. It carries out the reaction a 1,2-diacyl-sn-glycero-3-phosphocholine + H2O = a 1-acyl-sn-glycero-3-phosphocholine + a fatty acid + H(+). Its function is as follows. Snake venom phospholipase A2 (PLA2) that shows a moderate inhibition of ADP-induced human platelet aggregation when tested on platelet rich plasma. Exhibits high hydrolytic activities and prefers the anionic micelles (dPPC with deoxycholate) to the zwitterionic micelles (dPPC with Triton X-100). PLA2 catalyzes the calcium-dependent hydrolysis of the 2-acyl groups in 3-sn-phosphoglycerides. This chain is Acidic phospholipase A2 Ts-A5, found in Trimeresurus stejnegeri (Chinese green tree viper).